The chain runs to 192 residues: Lipid A acyltransferase PagP (192 aa).

A signal peptide spans 1 to 24; sequence MWLRFCAPALMAWYWVFFPSTSQA. Residues His63, Asp106, and Ser107 contribute to the active site.

The protein belongs to the lipid A palmitoyltransferase family. Homodimer.

It is found in the cell outer membrane. It carries out the reaction a lipid A + a 1,2-diacyl-sn-glycero-3-phosphocholine = a hepta-acyl lipid A + a 2-acyl-sn-glycero-3-phosphocholine. It catalyses the reaction a lipid IVA + a 1,2-diacyl-sn-glycero-3-phosphocholine = a lipid IVB + a 2-acyl-sn-glycero-3-phosphocholine. The catalysed reaction is a lipid IIA + a 1,2-diacyl-sn-glycero-3-phosphocholine = a lipid IIB + a 2-acyl-sn-glycero-3-phosphocholine. Functionally, transfers a fatty acid residue from the sn-1 position of a phospholipid to the N-linked hydroxyfatty acid chain on the proximal unit of lipid A or its precursors. In Musicola paradisiaca (strain Ech703) (Dickeya paradisiaca), this protein is Lipid A acyltransferase PagP.